The primary structure comprises 216 residues: ATP phosphoribosyltransferase (216 aa).

Belongs to the ATP phosphoribosyltransferase family. Short subfamily. Heteromultimer composed of HisG and HisZ subunits.

It is found in the cytoplasm. The catalysed reaction is 1-(5-phospho-beta-D-ribosyl)-ATP + diphosphate = 5-phospho-alpha-D-ribose 1-diphosphate + ATP. It participates in amino-acid biosynthesis; L-histidine biosynthesis; L-histidine from 5-phospho-alpha-D-ribose 1-diphosphate: step 1/9. In terms of biological role, catalyzes the condensation of ATP and 5-phosphoribose 1-diphosphate to form N'-(5'-phosphoribosyl)-ATP (PR-ATP). Has a crucial role in the pathway because the rate of histidine biosynthesis seems to be controlled primarily by regulation of HisG enzymatic activity. The chain is ATP phosphoribosyltransferase from Chromohalobacter salexigens (strain ATCC BAA-138 / DSM 3043 / CIP 106854 / NCIMB 13768 / 1H11).